The primary structure comprises 333 residues: Autoinducer 2 import system permease protein LsrD (333 aa).

The next 10 membrane-spanning stretches (helical) occupy residues 7–27 (YGWE…FGLS), 45–65 (ICIG…GIDI), 67–87 (FGST…AGVP), 90–110 (VAIP…AGLI), 118–138 (LVIT…LSGL), 162–182 (LFGL…FWLL), 212–232 (TLCM…ILLV), 240–260 (SDLG…GGAN), 261–281 (IYGG…VGYL), and 288–308 (IGTP…LVVV).

Belongs to the binding-protein-dependent transport system permease family. AraH/RbsC subfamily. The complex is composed of two ATP-binding proteins (LsrA), two transmembrane proteins (LsrC and LsrD) and a solute-binding protein (LsrB).

It localises to the cell inner membrane. Its function is as follows. Part of the ABC transporter complex LsrABCD involved in autoinducer 2 (AI-2) import. Probably responsible for the translocation of the substrate across the membrane. This chain is Autoinducer 2 import system permease protein LsrD (lsrD), found in Yersinia pestis bv. Antiqua (strain Antiqua).